Reading from the N-terminus, the 436-residue chain is Prenyltransferase nscD (436 aa).

Belongs to the tryptophan dimethylallyltransferase family.

Its pathway is secondary metabolite biosynthesis. Prenyltransferase; part of the gene cluster that mediates the biosynthesis of neosartoricin B, a prenylated anthracenone that probably exhibits T-cell antiproliferative activity, suggestive of a physiological role as an immunosuppressive agent. The non-reducing polyketide synthase nscA probably synthesizes and cyclizes the decaketide backbone. The hydrolase nscB then mediates the product release through hydrolysis followed by spontaneous decarboxylation. The prenyltransferase nscD catalyzes the addition of the dimethylallyl group to the aromatic C5. The FAD-dependent monooxygenase nscC is then responsible for the stereospecific hydroxylation at C2. Neosartoricin B can be converted into two additional compounds neosartoricins C and D. Neosartoricin C is a spirocyclic compound that is cyclized through the attack of C3 hydroxyl on C14, followed by dehydration. On the other hand, neosartoricin D is a further cyclized compound in which attack of C2 on C14 in neosartoricin C results in the formation of the acetal-containing dioxabicyclo-octanone ring. Both of these compounds are novel and possibly represent related metabolites of the gene cluster. The protein is Prenyltransferase nscD of Trichophyton rubrum (strain ATCC MYA-4607 / CBS 118892) (Athlete's foot fungus).